The chain runs to 250 residues: Methylthioribulose-1-phosphate dehydratase (250 aa).

Zn(2+)-binding residues include His-103 and His-105.

Belongs to the aldolase class II family. MtnB subfamily. Zn(2+) is required as a cofactor.

The enzyme catalyses 5-(methylsulfanyl)-D-ribulose 1-phosphate = 5-methylsulfanyl-2,3-dioxopentyl phosphate + H2O. It participates in amino-acid biosynthesis; L-methionine biosynthesis via salvage pathway; L-methionine from S-methyl-5-thio-alpha-D-ribose 1-phosphate: step 2/6. Its function is as follows. Catalyzes the dehydration of methylthioribulose-1-phosphate (MTRu-1-P) into 2,3-diketo-5-methylthiopentyl-1-phosphate (DK-MTP-1-P). This chain is Methylthioribulose-1-phosphate dehydratase, found in Leptospira borgpetersenii serovar Hardjo-bovis (strain JB197).